The sequence spans 211 residues: Transcriptional regulatory protein RcsA (211 aa).

One can recognise an HTH luxR-type domain in the interval 135-200 (SEVHPFTLSQ…VIYHVVRLTD (66 aa)). Residues 159 to 178 (TIQISDKMQIKAKTVSSHKG) constitute a DNA-binding region (H-T-H motif).

The protein belongs to the RcsA family.

Component of the Rcs signaling system, which controls transcription of numerous genes. Binds to DNA to regulate expression of genes. The sequence is that of Transcriptional regulatory protein RcsA from Erwinia amylovora (Fire blight bacteria).